The following is a 261-amino-acid chain: Carbonic anhydrase 1 (261 aa).

The disordered stretch occupies residues 1–40 (MASPDWGYDDKNGPEQWSKLYPIANGNNQSPVDIKTSETK). An N-acetylalanine modification is found at A2. In terms of domain architecture, Alpha-carbonic anhydrase spans 4 to 261 (PDWGYDDKNG…LKGRTVRASF (258 aa)). The active-site Proton donor/acceptor is the H65. H95, H97, and H120 together coordinate Zn(2+). Substrate contacts are provided by residues T200 and 200–201 (TH). Residues 241-261 (PMQHNNRPTQPLKGRTVRASF) are disordered.

It belongs to the alpha-carbonic anhydrase family. Zn(2+) is required as a cofactor.

The protein resides in the cytoplasm. The enzyme catalyses hydrogencarbonate + H(+) = CO2 + H2O. It carries out the reaction urea = cyanamide + H2O. Its activity is regulated as follows. Inhibited by acetazolamide. In terms of biological role, catalyzes the reversible hydration of carbon dioxide. Can hydrate cyanamide to urea. The protein is Carbonic anhydrase 1 (CA1) of Pan troglodytes (Chimpanzee).